Reading from the N-terminus, the 228-residue chain is Cytochrome P450 monooxygenase ataY (228 aa).

A heme-binding site is contributed by Cys-216.

It belongs to the cytochrome P450 family. Requires heme as cofactor.

The protein operates within mycotoxin biosynthesis. Its function is as follows. Cytochrome P450 monooxygenase; part of the gene cluster that mediates the biosynthesis of acetylaranotin, a member of the epipolythiodioxopiperazine (ETP) class of toxins characterized by a disulfide-bridged cyclic dipeptide. The first step of acetylaranotin biosynthesis is performed by the NRPS ataP which produces diketopiperazine cyclo-L-Phe-L-Phe via the condensation of 2 phenylalanines (L-Phe). The ataC domain of ataTC then catalyzes the formation of bishydroxylation of cyclo-L-Phe-L-Phe. The glutathione S-transferase domain ataG in ataIMG further catalyzes the conjugation of two glutathiones to the bishydroxylated intermediate. Next, the dipeptidase ataJ removes the Glu residues. The following step is performed by the carbon sulfur lyase domain ataI of ataIMG which may convert the bis-cysteinyl adduct to yield an epidithiol intermediate. The ataT domain from ataTC then catalyzes the oxidation of the free dithiols, followed by a cyclization step catalyzed by the cytochrome P450 ataF. AtaF probably acts as an epoxidase to promote a dual epoxidation formation at C8 and C9 along with C8' and C9', followed by the spontaneous nucleophilic attack of the amide nitrogens N10 and N10' to yield an intermediate with the pyrrolidine partial structure. The final steps of acetylaranotin biosynthesis involve the acetylation and ring rearrangement of an epitetrathiodiketopiperazine intermediate to produce acetylaranotin. AtaH probably catalyzes the acetylation of epitetrathiodiketopiperazine to produce a diacetate and ataY is responsible for the formation of the dihydrooxepin moiety that converts the diacetate intermediate to acetylaranotin via acetylapoaranotin. Both enzymes could function independently in the absence of the other. The acetylaranotin bis-thiomethyltransferase ataS located outside of acetylaranotin gene cluster is the main thiomethyltransferase responsible for converting acetylaranotin and its related intermediates to their methylated forms. The sequence is that of Cytochrome P450 monooxygenase ataY from Aspergillus terreus (strain NIH 2624 / FGSC A1156).